The sequence spans 582 residues: DnaJ protein ERDJ3A (582 aa).

The N-terminal stretch at 1–25 is a signal peptide; it reads MGIPVRSLLVASIVLSSIALHVAAA. The J domain maps to 29–93; it reads DPYKVLGVDK…EKRKNYDLYG (65 aa). N-linked (GlcNAc...) asparagine glycosylation occurs at Asn-61. The disordered stretch occupies residues 178 to 201; sequence GGSQHTGSAGKARRGTKSSGHDSS. Residues 407–437 are a coiled coil; sequence VKDLRSGIKELKNLLENFEKKNKKLASNQAK.

Interacts with BIP5.

It is found in the endoplasmic reticulum. Its subcellular location is the vacuole. In terms of biological role, may play a role in protein folding in the endoplasmic reticulum. The sequence is that of DnaJ protein ERDJ3A from Oryza sativa subsp. japonica (Rice).